We begin with the raw amino-acid sequence, 275 residues long: NH(3)-dependent NAD(+) synthetase (275 aa).

An ATP-binding site is contributed by 46 to 53 (GISGGQDS). D52 provides a ligand contact to Mg(2+). R140 contacts deamido-NAD(+). T160 is a binding site for ATP. Residue E165 participates in Mg(2+) binding. 2 residues coordinate deamido-NAD(+): K173 and D180. ATP-binding residues include K189 and T211. Residue 260-261 (HK) coordinates deamido-NAD(+).

It belongs to the NAD synthetase family. As to quaternary structure, homodimer.

It catalyses the reaction deamido-NAD(+) + NH4(+) + ATP = AMP + diphosphate + NAD(+) + H(+). Its pathway is cofactor biosynthesis; NAD(+) biosynthesis; NAD(+) from deamido-NAD(+) (ammonia route): step 1/1. Functionally, catalyzes the ATP-dependent amidation of deamido-NAD to form NAD. Uses ammonia as a nitrogen source. The sequence is that of NH(3)-dependent NAD(+) synthetase from Salmonella dublin (strain CT_02021853).